Here is a 299-residue protein sequence, read N- to C-terminus: Oxygen-dependent coproporphyrinogen-III oxidase (299 aa).

S92 lines the substrate pocket. A divalent metal cation contacts are provided by H96 and H106. H106 serves as the catalytic Proton donor. A substrate-binding site is contributed by N108 to R110. A divalent metal cation is bound by residues H145 and H175. The tract at residues Y240–E275 is important for dimerization. G258 to R260 is a substrate binding site.

Belongs to the aerobic coproporphyrinogen-III oxidase family. In terms of assembly, homodimer. A divalent metal cation is required as a cofactor.

The protein resides in the cytoplasm. The enzyme catalyses coproporphyrinogen III + O2 + 2 H(+) = protoporphyrinogen IX + 2 CO2 + 2 H2O. It functions in the pathway porphyrin-containing compound metabolism; protoporphyrin-IX biosynthesis; protoporphyrinogen-IX from coproporphyrinogen-III (O2 route): step 1/1. Functionally, involved in the heme biosynthesis. Catalyzes the aerobic oxidative decarboxylation of propionate groups of rings A and B of coproporphyrinogen-III to yield the vinyl groups in protoporphyrinogen-IX. The sequence is that of Oxygen-dependent coproporphyrinogen-III oxidase from Shigella flexneri.